A 961-amino-acid polypeptide reads, in one-letter code: Glycine dehydrogenase (decarboxylating) (961 aa).

An N6-(pyridoxal phosphate)lysine modification is found at Lys709.

Belongs to the GcvP family. As to quaternary structure, the glycine cleavage system is composed of four proteins: P, T, L and H. It depends on pyridoxal 5'-phosphate as a cofactor.

It carries out the reaction N(6)-[(R)-lipoyl]-L-lysyl-[glycine-cleavage complex H protein] + glycine + H(+) = N(6)-[(R)-S(8)-aminomethyldihydrolipoyl]-L-lysyl-[glycine-cleavage complex H protein] + CO2. The glycine cleavage system catalyzes the degradation of glycine. The P protein binds the alpha-amino group of glycine through its pyridoxal phosphate cofactor; CO(2) is released and the remaining methylamine moiety is then transferred to the lipoamide cofactor of the H protein. This chain is Glycine dehydrogenase (decarboxylating), found in Streptomyces griseus subsp. griseus (strain JCM 4626 / CBS 651.72 / NBRC 13350 / KCC S-0626 / ISP 5235).